Consider the following 406-residue polypeptide: Phosphopentomutase (406 aa).

Aspartate 10, aspartate 305, histidine 310, aspartate 346, histidine 347, and histidine 358 together coordinate Mn(2+).

It belongs to the phosphopentomutase family. Mn(2+) is required as a cofactor.

It is found in the cytoplasm. It catalyses the reaction 2-deoxy-alpha-D-ribose 1-phosphate = 2-deoxy-D-ribose 5-phosphate. The enzyme catalyses alpha-D-ribose 1-phosphate = D-ribose 5-phosphate. Its pathway is carbohydrate degradation; 2-deoxy-D-ribose 1-phosphate degradation; D-glyceraldehyde 3-phosphate and acetaldehyde from 2-deoxy-alpha-D-ribose 1-phosphate: step 1/2. Isomerase that catalyzes the conversion of deoxy-ribose 1-phosphate (dRib-1-P) and ribose 1-phosphate (Rib-1-P) to deoxy-ribose 5-phosphate (dRib-5-P) and ribose 5-phosphate (Rib-5-P), respectively. The sequence is that of Phosphopentomutase from Rhizobium rhizogenes (strain K84 / ATCC BAA-868) (Agrobacterium radiobacter).